A 357-amino-acid chain; its full sequence is Protein-glutamate methylesterase/protein-glutamine glutaminase (357 aa).

The Response regulatory domain occupies R3–M120. D54 is subject to 4-aspartylphosphate. In terms of domain architecture, CheB-type methylesterase spans F161–E355. Residues S173, H200, and D296 contribute to the active site.

This sequence belongs to the CheB family. Phosphorylated by CheA. Phosphorylation of the N-terminal regulatory domain activates the methylesterase activity.

The protein resides in the cytoplasm. It carries out the reaction [protein]-L-glutamate 5-O-methyl ester + H2O = L-glutamyl-[protein] + methanol + H(+). The catalysed reaction is L-glutaminyl-[protein] + H2O = L-glutamyl-[protein] + NH4(+). In terms of biological role, involved in chemotaxis. Part of a chemotaxis signal transduction system that modulates chemotaxis in response to various stimuli. Catalyzes the demethylation of specific methylglutamate residues introduced into the chemoreceptors (methyl-accepting chemotaxis proteins or MCP) by CheR. Also mediates the irreversible deamidation of specific glutamine residues to glutamic acid. The polypeptide is Protein-glutamate methylesterase/protein-glutamine glutaminase (Bacillus licheniformis (strain ATCC 14580 / DSM 13 / JCM 2505 / CCUG 7422 / NBRC 12200 / NCIMB 9375 / NCTC 10341 / NRRL NRS-1264 / Gibson 46)).